Consider the following 397-residue polypeptide: Ribosomal RNA processing protein 1 homolog (397 aa).

Residues 334 to 343 are compositionally biased toward basic and acidic residues; sequence EAAEAARQEN. Positions 334–366 are disordered; that stretch reads EAAEAARQENGDDVPDDEIAEVKKGNGKKTAVP.

Belongs to the RRP1 family.

The protein localises to the nucleus. In terms of biological role, may be involved in the generation of 28S rRNA. In Caenorhabditis elegans, this protein is Ribosomal RNA processing protein 1 homolog.